We begin with the raw amino-acid sequence, 601 residues long: Cdc42-interacting protein 4 (601 aa).

Residues 1 to 117 (MDWGTELWDQ…EMKQERKMHF (117 aa)) form a required for translocation to the plasma membrane in response to insulin, podosome formation and interaction with AKAP9 and microtubules region. The 264-residue stretch at 1-264 (MDWGTELWDQ…AANAVDPKND (264 aa)) folds into the F-BAR domain. The stretch at 67 to 259 (FSQQQSFVQI…EGMKVAANAV (193 aa)) forms a coiled coil. Disordered regions lie at residues 280–358 (GDVE…GRDP), 390–420 (DFSH…EVDQ), and 478–543 (NRGD…SPIG). The span at 289–302 (QPMNRAPSDSSLGT) shows a compositional bias: polar residues. Positions 293–537 (RAPSDSSLGT…TEFDEDFEEE (245 aa)) are interaction with CDC42. The segment at 293-601 (RAPSDSSLGT…PTSYLRVTLN (309 aa)) is interaction with PDE6G. Residues S296, S298, and S299 each carry the phosphoserine modification. The segment covering 314 to 329 (GRSRTKRWPFGKKNKP) has biased composition (basic residues). Residue S335 is modified to Phosphoserine. Over residues 336–346 (PLGGPVPSALP) the composition is skewed to low complexity. S351 is modified (phosphoserine). The stretch at 388-481 (TEDFSHLPPE…ESRVLSNRGD (94 aa)) forms a coiled coil. The REM-1 domain occupies 393-470 (HLPPEQQRKR…VQKYEAWLAE (78 aa)). Over residues 407 to 420 (LEERSRELQKEVDQ) the composition is skewed to basic and acidic residues. Residues 471-601 (AESRVLSNRG…PTSYLRVTLN (131 aa)) are required for interaction with FASLG and localization to lysosomes. Position 482 is a phosphoserine (S482). Residues 487 to 541 (ARPPDPPTSAPPDSSSNSASQDTKESSEEPPSEESQDTPIYTEFDEDFEEEPTSP) are interaction with DNM2 and WASL. The span at 497–506 (PPDSSSNSAS) shows a compositional bias: low complexity. Positions 529-538 (EFDEDFEEEP) are enriched in acidic residues. Residues 529–601 (EFDEDFEEEP…PTSYLRVTLN (73 aa)) form an interaction with DNM1 and WASL region. Positions 538 to 601 (PTSPIGHCVA…PTSYLRVTLN (64 aa)) are required for podosome formation. One can recognise an SH3 domain in the interval 540 to 601 (SPIGHCVAIY…PTSYLRVTLN (62 aa)). Residues 544-601 (HCVAIYHFEGSSEGTISMAEGEDLSLMEEDKGDGWTRVRRKEGGEGYVPTSYLRVTLN) are interaction with WAS. The interaction with ARHGAP17, DAAM1, DIAPH1 and DIAPH2 stretch occupies residues 546–601 (VAIYHFEGSSEGTISMAEGEDLSLMEEDKGDGWTRVRRKEGGEGYVPTSYLRVTLN).

The protein belongs to the FNBP1 family. In terms of assembly, homodimerizes, the dimers can polymerize end-to-end to form filamentous structures. Interacts with AKAP9, ARHGAP17, DAAM1, DIAPH1, DIAPH2, DNM1, FASLG/FASL, GAPVD1, LYN, microtubules, PDE6G, SRC and WAS/WASP. Interacts with the ligand binding domain of the thyroid receptor (TR) in the presence of thyroid hormone. May interact with CTNNB1 and HD/HTT. Interacts specifically with GTP-bound CDC42 and RHOQ. Interacts with DNM2 and WASL. Tyrosine phosphorylated. Also phosphorylated by PKA.

It is found in the cytoplasm. Its subcellular location is the cytoskeleton. It localises to the cell cortex. The protein localises to the lysosome. The protein resides in the golgi apparatus. It is found in the cell membrane. Its subcellular location is the cell projection. It localises to the phagocytic cup. Functionally, required to coordinate membrane tubulation with reorganization of the actin cytoskeleton during endocytosis. Also acts as a link between CDC42 signaling and regulation of the actin cytoskeleton. Binds to lipids such as phosphatidylinositol 4,5-bisphosphate and phosphatidylserine and promotes membrane invagination and the formation of tubules. Also enhances actin polymerization in the vicinity of membrane tubules by recruiting WASL/N-WASP which in turn activates the Arp2/3 complex. Actin polymerization and dynamin may promote the fission of membrane tubules to form endocytic vesicles. Required for the formation of podosomes, actin-rich adhesion structures specific to monocyte-derived cells. Required for translocation of GLUT4 to the plasma membrane in response to insulin signaling. May be required for the lysosomal retention of FASLG/FASL. This is Cdc42-interacting protein 4 (TRIP10) from Pongo abelii (Sumatran orangutan).